The chain runs to 512 residues: 2,3-bisphosphoglycerate-independent phosphoglycerate mutase (512 aa).

Residues Asp-12 and Ser-62 each contribute to the Mn(2+) site. Ser-62 serves as the catalytic Phosphoserine intermediate. Substrate contacts are provided by residues His-123, 153–154 (RD), Arg-185, Arg-191, 260–263 (RPDR), and Lys-333. The Mn(2+) site is built by Asp-400, His-404, Asp-441, His-442, and His-460.

It belongs to the BPG-independent phosphoglycerate mutase family. As to quaternary structure, monomer. Requires Mn(2+) as cofactor.

The catalysed reaction is (2R)-2-phosphoglycerate = (2R)-3-phosphoglycerate. It functions in the pathway carbohydrate degradation; glycolysis; pyruvate from D-glyceraldehyde 3-phosphate: step 3/5. Its function is as follows. Catalyzes the interconversion of 2-phosphoglycerate and 3-phosphoglycerate. In Clostridium beijerinckii (strain ATCC 51743 / NCIMB 8052) (Clostridium acetobutylicum), this protein is 2,3-bisphosphoglycerate-independent phosphoglycerate mutase.